The sequence spans 1058 residues: Carbamoyl phosphate synthase large chain (1058 aa).

The interval 1–401 (MPKRTDIQKI…SLLKACRSLE (401 aa)) is carboxyphosphate synthetic domain. ATP contacts are provided by Arg129, Arg169, Gly175, Gly176, Arg208, Ile210, Glu215, Gly241, Ile242, His243, Gln284, and Glu298. The region spanning 133–327 (KQLMEELEQP…IAKLAAKIAV (195 aa)) is the ATP-grasp 1 domain. Mg(2+)-binding residues include Gln284, Glu298, and Asn300. Gln284, Glu298, and Asn300 together coordinate Mn(2+). The tract at residues 402–546 (IGVHHNEIPE…YSTYGWENES (145 aa)) is oligomerization domain. The interval 547–929 (IRSDKESVLV…ALYKAFEASY (383 aa)) is carbamoyl phosphate synthetic domain. The region spanning 671–861 (EQALKELDIP…MAQVATKLIL (191 aa)) is the ATP-grasp 2 domain. ATP contacts are provided by Arg707, Ser746, Ile748, Glu752, Gly777, Val778, His779, Ser780, Gln820, and Glu832. Mg(2+) contacts are provided by Gln820, Glu832, and Asn834. The Mn(2+) site is built by Gln820, Glu832, and Asn834. Positions 930-1058 (LHLPTFGNVV…ESRSFVTEAI (129 aa)) constitute an MGS-like domain. The interval 930–1058 (LHLPTFGNVV…ESRSFVTEAI (129 aa)) is allosteric domain.

Belongs to the CarB family. Composed of two chains; the small (or glutamine) chain promotes the hydrolysis of glutamine to ammonia, which is used by the large (or ammonia) chain to synthesize carbamoyl phosphate. Tetramer of heterodimers (alpha,beta)4. It depends on Mg(2+) as a cofactor. The cofactor is Mn(2+).

The catalysed reaction is hydrogencarbonate + L-glutamine + 2 ATP + H2O = carbamoyl phosphate + L-glutamate + 2 ADP + phosphate + 2 H(+). It catalyses the reaction hydrogencarbonate + NH4(+) + 2 ATP = carbamoyl phosphate + 2 ADP + phosphate + 2 H(+). It participates in amino-acid biosynthesis; L-arginine biosynthesis; carbamoyl phosphate from bicarbonate: step 1/1. It functions in the pathway pyrimidine metabolism; UMP biosynthesis via de novo pathway; (S)-dihydroorotate from bicarbonate: step 1/3. In terms of biological role, large subunit of the glutamine-dependent carbamoyl phosphate synthetase (CPSase). CPSase catalyzes the formation of carbamoyl phosphate from the ammonia moiety of glutamine, carbonate, and phosphate donated by ATP, constituting the first step of 2 biosynthetic pathways, one leading to arginine and/or urea and the other to pyrimidine nucleotides. The large subunit (synthetase) binds the substrates ammonia (free or transferred from glutamine from the small subunit), hydrogencarbonate and ATP and carries out an ATP-coupled ligase reaction, activating hydrogencarbonate by forming carboxy phosphate which reacts with ammonia to form carbamoyl phosphate. The polypeptide is Carbamoyl phosphate synthase large chain (Streptococcus pneumoniae (strain 70585)).